Consider the following 420-residue polypeptide: Phosphoglycerate kinase, cytosolic (420 aa).

12 residues coordinate (2R)-3-phosphoglycerate: Val-23, Asp-24, Phe-25, Asn-26, Arg-39, Ser-61, His-62, Gly-64, Arg-65, Arg-135, His-171, and Arg-172. An ADP-binding site is contributed by Gly-217. Gly-217 contributes to the CDP binding site. Lys-219 contributes to the (2R)-3-phosphoglycerate binding site. Lys-219 contributes to the AMP binding site. Asp-222 lines the CDP pocket. Residue Asp-222 coordinates Mg(2+). ADP is bound by residues Lys-223 and Gly-241. Lys-223 contributes to the AMP binding site. Lys-223 lines the ATP pocket. CDP is bound at residue Gly-241. AMP is bound by residues Ala-242 and Ala-314. ATP contacts are provided by Ala-242 and Ala-314. Positions 314 and 338 each coordinate ADP. Residues Gly-339 and Phe-344 each coordinate CDP. ADP contacts are provided by Phe-344, Glu-345, Asp-377, and Ser-378. Glu-345 is a binding site for AMP. 3 residues coordinate ATP: Glu-345, Asp-377, and Ser-378. Residue Asp-377 participates in Mg(2+) binding.

Belongs to the phosphoglycerate kinase family. Monomer. Mg(2+) is required as a cofactor.

The protein localises to the cytoplasm. The catalysed reaction is (2R)-3-phosphoglycerate + ATP = (2R)-3-phospho-glyceroyl phosphate + ADP. The protein operates within carbohydrate degradation; glycolysis; pyruvate from D-glyceraldehyde 3-phosphate: step 2/5. The polypeptide is Phosphoglycerate kinase, cytosolic (C1PGK) (Trypanosoma congolense).